The following is a 208-amino-acid chain: Small ribosomal subunit protein uS4 (208 aa).

Positions 95 to 157 (RRIDNVVYRA…DRLKKLVRSN (63 aa)) constitute an S4 RNA-binding domain.

It belongs to the universal ribosomal protein uS4 family. As to quaternary structure, part of the 30S ribosomal subunit. Contacts protein S5. The interaction surface between S4 and S5 is involved in control of translational fidelity.

Functionally, one of the primary rRNA binding proteins, it binds directly to 16S rRNA where it nucleates assembly of the body of the 30S subunit. With S5 and S12 plays an important role in translational accuracy. In Borrelia turicatae (strain 91E135), this protein is Small ribosomal subunit protein uS4.